Consider the following 323-residue polypeptide: Viral cathepsin (323 aa).

Positions 1 to 18 (MSKFLLYWFVYGVVCSAA) are cleaved as a signal peptide. A propeptide spans 19–112 (YDILKAPNYF…VVLDRPPGKG (94 aa)) (activation peptide). Intrachain disulfides connect Cys-133–Cys-174, Cys-167–Cys-207, and Cys-262–Cys-310. Cys-136 is a catalytic residue. Asn-158 carries N-linked (GlcNAc...) asparagine; by host glycosylation. Catalysis depends on residues His-269 and Asn-289.

The protein belongs to the peptidase C1 family. Synthesized as an inactive proenzyme and activated by proteolytic removal of the inhibitory propeptide.

It carries out the reaction Endopeptidase of broad specificity, hydrolyzing substrates of both cathepsin L and cathepsin B.. In terms of biological role, cysteine protease that plays an essential role in host liquefaction to facilitate horizontal transmission of the virus. May participate in the degradation of foreign protein expressed by the baculovirus system. In Lepidoptera (butterflies and moths), this protein is Viral cathepsin (VCATH).